A 187-amino-acid chain; its full sequence is Shikimate kinase (187 aa).

Position 19–24 (19–24) interacts with ATP; sequence GSGKST. Serine 23 lines the Mg(2+) pocket. The substrate site is built by aspartate 41, arginine 65, and glycine 87. Arginine 124 provides a ligand contact to ATP. A substrate-binding site is contributed by arginine 143. Residue arginine 160 coordinates ATP.

This sequence belongs to the shikimate kinase family. Monomer. It depends on Mg(2+) as a cofactor.

The protein localises to the cytoplasm. The enzyme catalyses shikimate + ATP = 3-phosphoshikimate + ADP + H(+). The protein operates within metabolic intermediate biosynthesis; chorismate biosynthesis; chorismate from D-erythrose 4-phosphate and phosphoenolpyruvate: step 5/7. Its function is as follows. Catalyzes the specific phosphorylation of the 3-hydroxyl group of shikimic acid using ATP as a cosubstrate. The sequence is that of Shikimate kinase from Rippkaea orientalis (strain PCC 8801 / RF-1) (Cyanothece sp. (strain PCC 8801)).